The primary structure comprises 513 residues: MKISILLMFLWGLSCALPVTRYQNNESEDSEEWKGHLAQAPTPPLESSESSEGSKVSSEEQANEDPSDSTQSEEGLGSDDHQYIYRLAGGFSRSTGKGGDDKDDDEDDSGDDTFGDDDSGPGPKDRQEGGNSRLGSDEDSDDTIQASEESAPQGQDSAQDTTSESRELDNEDRVDSKPEGGDSTQESESEEHWVGGGSDGESSHGDGSELDDEGMQSDDPESIRSERGNSRMNSAGMKSKESGENSEQANTQDSGGSQLLEHPSRKIFRKSRISEEDDRSELDDNNTMEEVKSDSTENSNSRDTGLSQPRRDSKGDSQEDSKENLSQEESQNVDGPSSESSQEANLSSQENSSESQEEVVSESRGDNPDPTTSYVEDQEDSDSSEEDSSHTLSHSKSESREEQADSESSESLNFSEESPESPEDENSSSQEGLQSHSSSAESQSEESHSEEDDSDSQDSSRSKEDSNSTESKSSSEEDGQLKNIEIESRKLTVDAYHNKPIGDQDDNDCQDGY.

The signal sequence occupies residues 1-16; sequence MKISILLMFLWGLSCA. Positions 23–513 are disordered; sequence QNNESEDSEE…QDDNDCQDGY (491 aa). Asparagine 25 carries N-linked (GlcNAc...) asparagine glycosylation. A compositionally biased stretch (low complexity) spans 46–60; it reads ESSESSEGSKVSSEE. A compositionally biased stretch (acidic residues) spans 101-119; sequence DKDDDEDDSGDDTFGDDDS. Residues 143-162 are compositionally biased toward polar residues; that stretch reads TIQASEESAPQGQDSAQDTT. The span at 163 to 180 shows a compositional bias: basic and acidic residues; the sequence is SESRELDNEDRVDSKPEG. The segment covering 208–220 has biased composition (acidic residues); it reads SELDDEGMQSDDP. Residues 245–257 show a composition bias toward polar residues; it reads NSEQANTQDSGGS. Residues 275–287 are compositionally biased toward acidic residues; sequence EEDDRSELDDNNT. N-linked (GlcNAc...) asparagine glycosylation is present at asparagine 285. Over residues 296–307 the composition is skewed to polar residues; the sequence is TENSNSRDTGLS. Over residues 309 to 325 the composition is skewed to basic and acidic residues; that stretch reads PRRDSKGDSQEDSKENL. Residues asparagine 324, asparagine 345, and asparagine 351 are each glycosylated (N-linked (GlcNAc...) asparagine). The span at 337 to 354 shows a compositional bias: low complexity; it reads SSESSQEANLSSQENSSE. Positions 364 to 366 match the Cell attachment site motif; that stretch reads RGD. Residues 376–386 show a composition bias toward acidic residues; it reads EDQEDSDSSEE. 2 N-linked (GlcNAc...) asparagine glycosylation sites follow: asparagine 413 and asparagine 426. Positions 417–426 are enriched in acidic residues; sequence ESPESPEDEN. Low complexity predominate over residues 427-442; the sequence is SSSQEGLQSHSSSAES. Asparagine 467 carries an N-linked (GlcNAc...) asparagine glycan. Residues 484–502 are compositionally biased toward basic and acidic residues; sequence IEIESRKLTVDAYHNKPIG. Positions 503 to 513 are enriched in acidic residues; the sequence is DQDDNDCQDGY.

In terms of assembly, interacts with importin alpha. Post-translationally, phosphorylated in the cytosol and extracellular matrix and unphosphorylated in the nucleus. Phosphorylation is necessary for nucleocytoplasmic transport and may be catalyzed by a nuclear isoform of CK2 and can be augmented by calcium. Phosphorylated (in vitro) by FAM20C in the extracellular medium at sites within the S-x-E/pS motif. Expressed in tooth particularly in odontoblast, ameloblast and cementoblast.

The protein localises to the nucleus. The protein resides in the cytoplasm. It localises to the secreted. It is found in the extracellular space. Its subcellular location is the extracellular matrix. May have a dual function during osteoblast differentiation. In the nucleus of undifferentiated osteoblasts, unphosphorylated form acts as a transcriptional component for activation of osteoblast-specific genes like osteocalcin. During the osteoblast to osteocyte transition phase it is phosphorylated and exported into the extracellular matrix, where it regulates nucleation of hydroxyapatite. The polypeptide is Dentin matrix acidic phosphoprotein 1 (DMP1) (Homo sapiens (Human)).